We begin with the raw amino-acid sequence, 379 residues long: Queuine tRNA-ribosyltransferase (379 aa).

The active-site Proton acceptor is Asp-94. Substrate contacts are provided by residues 94 to 98, Asp-148, Gln-191, and Gly-218; that span reads DSGGF. The RNA binding stretch occupies residues 249 to 255; that stretch reads GVGSPDA. Asp-268 (nucleophile) is an active-site residue. The tract at residues 273-277 is RNA binding; important for wobble base 34 recognition; that stretch reads TRIAR. 4 residues coordinate Zn(2+): Cys-306, Cys-308, Cys-311, and His-337.

The protein belongs to the queuine tRNA-ribosyltransferase family. In terms of assembly, homodimer. Within each dimer, one monomer is responsible for RNA recognition and catalysis, while the other monomer binds to the replacement base PreQ1. Requires Zn(2+) as cofactor.

It catalyses the reaction 7-aminomethyl-7-carbaguanine + guanosine(34) in tRNA = 7-aminomethyl-7-carbaguanosine(34) in tRNA + guanine. It functions in the pathway tRNA modification; tRNA-queuosine biosynthesis. Functionally, catalyzes the base-exchange of a guanine (G) residue with the queuine precursor 7-aminomethyl-7-deazaguanine (PreQ1) at position 34 (anticodon wobble position) in tRNAs with GU(N) anticodons (tRNA-Asp, -Asn, -His and -Tyr). Catalysis occurs through a double-displacement mechanism. The nucleophile active site attacks the C1' of nucleotide 34 to detach the guanine base from the RNA, forming a covalent enzyme-RNA intermediate. The proton acceptor active site deprotonates the incoming PreQ1, allowing a nucleophilic attack on the C1' of the ribose to form the product. After dissociation, two additional enzymatic reactions on the tRNA convert PreQ1 to queuine (Q), resulting in the hypermodified nucleoside queuosine (7-(((4,5-cis-dihydroxy-2-cyclopenten-1-yl)amino)methyl)-7-deazaguanosine). This chain is Queuine tRNA-ribosyltransferase, found in Staphylococcus epidermidis (strain ATCC 35984 / DSM 28319 / BCRC 17069 / CCUG 31568 / BM 3577 / RP62A).